The chain runs to 837 residues: MSLSHLYRDGEGRIDDDDDERENFEITDWDLQNEFNPNRQRHWQTKEEATYGVWAERDSDDERPSFGGKRARDYSAPVNFISAGLKKGAAEEAELEDSDDEERPVKQDDFPKDFGPRKLKTGGNFKPSQKGFAGGTKSFMDFGSWERHTKGIGQKLLQKMGYVPGRGLGKNAQGIINPIEAKQRKGKGAVGAYGSERTTQSMQDFPVVDSEEEAEEEFQKELSQWRKDPSGSKKKPKYSYKTVEELKAKGRISKKLTAPQKELSQVKVIDMTGREQKVYYSYSQISHKHNVPDDGLPLQSQQLPQSGKEAKAPGFALPELEHNLQLLIDLTEQEIIQNDRQLQYERDMVVNLFHELEKMTEVLDHEERVISNLSKVLEMVEECERRMQPDCSNPLTLDECARIFETLQDKYYEEYRMSDRVDLAVAIVYPLMKEYFKEWDPLKDCTYGTEIISKWKSLLENDQLLSHGGQDLSADAFHRLIWEVWMPFVRNIVTQWQPRNCDPMVDFLDSWVHIIPVWILDNILDQLIFPKLQKEVENWNPLTDTVPIHSWIHPWLPLMQARLEPLYSPIRSKLSSALQKWHPSDSSAKLILQPWKDVFTPGSWEAFMVKNIVPKLGMCLGELVINPHQQHMDAFYWVIDWEGMISVSSLVGLLEKHFFPKWLQVLCSWLSNSPNYEEITKWYLGWKSMFSDQVLAHPSVKDKFNEALDIMNRAVSSNVGAYMQPGARENIAYLTHTERRKDFQYEAMQERREAENMAQRGIGVAASSVPMNFKDLIETKAEEHNIVFMPVIGKRHEGKQLYTFGRIVIYIDRGVVFVQGEKTWVPTSLQSLIDMAK.

Basic and acidic residues-rich tracts occupy residues 1–13 (MSLSHLYRDGEGR) and 53–64 (VWAERDSDDERP). Disordered stretches follow at residues 1-21 (MSLSHLYRDGEGRIDDDDDER), 53-72 (VWAERDSDDERPSFGGKRAR), and 85-133 (LKKG…KGFA). The tract at residues 1 to 50 (MSLSHLYRDGEGRIDDDDDERENFEITDWDLQNEFNPNRQRHWQTKEEAT) is required for interaction with DHX15. Phosphoserine is present on residues Ser2, Ser59, and Ser98. Over residues 91–102 (EEAELEDSDDEE) the composition is skewed to acidic residues. Positions 103–116 (RPVKQDDFPKDFGP) are enriched in basic and acidic residues. A Phosphoserine modification is found at Ser144. The G-patch domain occupies 149 to 195 (TKGIGQKLLQKMGYVPGRGLGKNAQGIINPIEAKQRKGKGAVGAYGS). Residues 179–236 (IEAKQRKGKGAVGAYGSERTTQSMQDFPVVDSEEEAEEEFQKELSQWRKDPSGSKKKP) are disordered. A Phosphoserine modification is found at Ser210. Residues 217-231 (EFQKELSQWRKDPSG) show a composition bias toward basic and acidic residues. Residues 700 to 705 (VKDKFN) carry the Nuclear localization signal motif. A required for nuclear speckle localization region spans residues 710 to 734 (IMNRAVSSNVGAYMQPGARENIAYL).

The protein belongs to the TFP11/STIP family. In terms of assembly, identified in the spliceosome C complex. Found in the Intron Large (IL) complex, a post-mRNA release spliceosomal complex containing the excised intron, U2, U5 and U6 snRNPs, and splicing factors. Interacts with TUFT1. Interacts with DHX15; indicative for a recruitment of DHX15 to the IL complex. Interacts with GCFC2.

The protein localises to the cytoplasm. Its subcellular location is the nucleus. Its function is as follows. Involved in pre-mRNA splicing, specifically in spliceosome disassembly during late-stage splicing events. Intron turnover seems to proceed through reactions in two lariat-intron associated complexes termed Intron Large (IL) and Intron Small (IS). In cooperation with DHX15 seems to mediate the transition of the U2, U5 and U6 snRNP-containing IL complex to the snRNP-free IS complex leading to efficient debranching and turnover of excised introns. May play a role in the differentiation of ameloblasts and odontoblasts or in the forming of the enamel extracellular matrix. The polypeptide is Tuftelin-interacting protein 11 (TFIP11) (Macaca mulatta (Rhesus macaque)).